The chain runs to 131 residues: Cytochrome b5 (131 aa).

Positions 3-79 (AKIFSLDEVS…LEEYLIGSLD (77 aa)) constitute a Cytochrome b5 heme-binding domain. Residues histidine 38 and histidine 62 each contribute to the heme site. A helical transmembrane segment spans residues 108-125 (IILPALAIIGALVYKYVI).

Belongs to the cytochrome b5 family.

The protein resides in the endoplasmic reticulum membrane. It is found in the microsome membrane. Membrane bound hemoprotein which function as an electron carrier for several membrane bound oxygenases. The sequence is that of Cytochrome b5 from Rhizopus stolonifer (Rhizopus nigricans).